The following is a 539-amino-acid chain: AT-rich interactive domain-containing protein 3A (539 aa).

A disordered region spans residues 1 to 190 (MKLQAVMETL…PLSGHPQLQD (190 aa)). Residues 55–73 (LKIQRAQAAALAAMRAAAA) show a composition bias toward low complexity. Residues 84-100 (SEEEDGESMASDEEDEK) are compositionally biased toward acidic residues. Basic and acidic residues predominate over residues 101–110 (ERDGESERYQ). The span at 113–141 (ASEEEDLKGKWDEDDFEDEGEDEYEDMEE) shows a compositional bias: acidic residues. The segment covering 161–173 (HSSQQAFPSQRSQ) has biased composition (polar residues). Positions 209-301 (DPKRKEFLDD…YLYPYECEKR (93 aa)) constitute an ARID domain. One can recognise an REKLES domain in the interval 404–499 (AALEQLREKL…GVLFAQPPTS (96 aa)). Residues 405–448 (ALEQLREKLESGEPPEKKMALGSEEQQRIIQRTIQHNLLAMTAQ) form an important for nuclear localization region. A homodimerization region spans residues 450–471 (PMNIRINSQAEGRQDSAVNLTT). Residues 495 to 502 (QPPTSASG) are important for cytoplasmic localization. The segment covering 497-512 (PTSASGTSKGSSNRTG) has biased composition (polar residues). The interval 497-539 (PTSASGTSKGSSNRTGSIGGGSSNSQAAPPSTPSAPNSNNPSP) is disordered. Low complexity predominate over residues 519-539 (SNSQAAPPSTPSAPNSNNPSP).

In terms of assembly, homodimer.

It localises to the nucleus. Its subcellular location is the cytoplasm. Its function is as follows. Transcription factor required for smad1 and smad2-mediated responses to TGFbeta during mesoderm induction. The polypeptide is AT-rich interactive domain-containing protein 3A (arid3a) (Xenopus laevis (African clawed frog)).